The primary structure comprises 305 residues: Methionyl-tRNA formyltransferase (305 aa).

108–111 (SLLP) contacts (6S)-5,6,7,8-tetrahydrofolate.

It belongs to the Fmt family.

It catalyses the reaction L-methionyl-tRNA(fMet) + (6R)-10-formyltetrahydrofolate = N-formyl-L-methionyl-tRNA(fMet) + (6S)-5,6,7,8-tetrahydrofolate + H(+). Its function is as follows. Attaches a formyl group to the free amino group of methionyl-tRNA(fMet). The formyl group appears to play a dual role in the initiator identity of N-formylmethionyl-tRNA by promoting its recognition by IF2 and preventing the misappropriation of this tRNA by the elongation apparatus. In Clavibacter michiganensis subsp. michiganensis (strain NCPPB 382), this protein is Methionyl-tRNA formyltransferase.